Consider the following 1246-residue polypeptide: Myosin-1 (1246 aa).

The interval 1 to 41 (MGHSRRPVGGEKKSRGFGRSKAVADVGDGRQTGGKPQVKKA) is disordered. Residues 51 to 730 (IGVSDLTLLS…TLFALEAMRD (680 aa)) enclose the Myosin motor domain. 144–151 (GESGAGKT) is a binding site for ATP. Ser-372 is subject to Phosphoserine. An actin-binding region spans residues 419–501 (SIGILDIYGF…PGVFAALNDA (83 aa)). IQ domains are found at residues 734 to 754 (HNMA…RIEC) and 755 to 780 (AIRI…QGHK). One can recognise a TH1 domain in the interval 788–976 (RRRMSLLGSR…TIHTSAGEPP (189 aa)). Residues 956–970 (GSSNVDTYKSSTIHT) show a composition bias toward polar residues. Disordered regions lie at residues 956–1080 (GSSN…PKKP) and 1127–1246 (WTPQ…DDEW). 2 stretches are compositionally biased toward pro residues: residues 1033–1045 (APQP…PVPQ) and 1065–1078 (APPP…PAPK). An SH3 domain is found at 1077-1138 (PKKPMAKVLY…PQAYLEEQKA (62 aa)). Low complexity-rich tracts occupy residues 1151-1166 (TPAT…AKAK) and 1214-1228 (NSAS…LAEA). Basic and acidic residues predominate over residues 1229-1240 (LRQRQEAMHGKQ).

The protein belongs to the TRAFAC class myosin-kinesin ATPase superfamily. Myosin family. In terms of processing, phosphorylation of the TEDS site (Ser-372) is required for the polarization of the actin cytoskeleton. Phosphorylation probably activates the myosin-I ATPase activity.

It is found in the cytoplasm. The protein resides in the cytoskeleton. Its subcellular location is the actin patch. Type-I myosin implicated in the organization of the actin cytoskeleton. Required for proper actin cytoskeleton polarization. At the cell cortex, assembles in patch-like structures together with proteins from the actin-polymerizing machinery and promotes actin assembly. Functions as actin nucleation-promoting factor (NPF) for the Arp2/3 complex. Plays an important role in polarized growth, spore germination, hyphal morphogenesis, and septal wall formation. In Aspergillus terreus (strain NIH 2624 / FGSC A1156), this protein is Myosin-1 (myoA).